The primary structure comprises 400 residues: Elongation factor Tu (400 aa).

In terms of domain architecture, tr-type G spans 10–209 (KPHVNVGTIG…AVDSYIPTPE (200 aa)). The segment at 19 to 26 (GHVDHGKT) is G1. GTP is bound at residue 19–26 (GHVDHGKT). Thr26 contacts Mg(2+). A G2 region spans residues 60–64 (GITIA). A G3 region spans residues 81-84 (DCPG). GTP contacts are provided by residues 81–85 (DCPGH) and 136–139 (NKVD). Residues 136-139 (NKVD) form a G4 region. The segment at 174–176 (SAL) is G5.

This sequence belongs to the TRAFAC class translation factor GTPase superfamily. Classic translation factor GTPase family. EF-Tu/EF-1A subfamily. As to quaternary structure, monomer.

It is found in the cytoplasm. It catalyses the reaction GTP + H2O = GDP + phosphate + H(+). GTP hydrolase that promotes the GTP-dependent binding of aminoacyl-tRNA to the A-site of ribosomes during protein biosynthesis. The protein is Elongation factor Tu of Moorella thermoacetica (strain ATCC 39073 / JCM 9320).